A 139-amino-acid chain; its full sequence is Ribulose bisphosphate carboxylase small subunit (139 aa).

Belongs to the RuBisCO small chain family. Heterohexadecamer of 8 large and 8 small subunits.

Its subcellular location is the plastid. It is found in the chloroplast. In terms of biological role, ruBisCO catalyzes two reactions: the carboxylation of D-ribulose 1,5-bisphosphate, the primary event in carbon dioxide fixation, as well as the oxidative fragmentation of the pentose substrate in the photorespiration process. Both reactions occur simultaneously and in competition at the same active site. Although the small subunit is not catalytic it is essential for maximal activity. The chain is Ribulose bisphosphate carboxylase small subunit from Trieres chinensis (Marine centric diatom).